The sequence spans 403 residues: Phosphopentomutase (403 aa).

D13, D298, H303, D339, H340, and H351 together coordinate Mn(2+).

It belongs to the phosphopentomutase family. The cofactor is Mn(2+).

Its subcellular location is the cytoplasm. It catalyses the reaction 2-deoxy-alpha-D-ribose 1-phosphate = 2-deoxy-D-ribose 5-phosphate. The catalysed reaction is alpha-D-ribose 1-phosphate = D-ribose 5-phosphate. It participates in carbohydrate degradation; 2-deoxy-D-ribose 1-phosphate degradation; D-glyceraldehyde 3-phosphate and acetaldehyde from 2-deoxy-alpha-D-ribose 1-phosphate: step 1/2. In terms of biological role, isomerase that catalyzes the conversion of deoxy-ribose 1-phosphate (dRib-1-P) and ribose 1-phosphate (Rib-1-P) to deoxy-ribose 5-phosphate (dRib-5-P) and ribose 5-phosphate (Rib-5-P), respectively. The polypeptide is Phosphopentomutase (Streptococcus pneumoniae serotype 19F (strain G54)).